The following is a 268-amino-acid chain: Type II methyltransferase M2.DpnII (268 aa).

This sequence belongs to the N(4)/N(6)-methyltransferase family. Homodimer.

The catalysed reaction is a 2'-deoxyadenosine in DNA + S-adenosyl-L-methionine = an N(6)-methyl-2'-deoxyadenosine in DNA + S-adenosyl-L-homocysteine + H(+). A beta subtype methylase that recognizes the single- or double-stranded sequence 5'-GATC-3', methylates A-2 on one or both strands (respectively), and protects the DNA from cleavage by the DpnII endonuclease. Further methylates DNA that is already methylated at 5'-GATC-3' sites. Essential for establishment of a previously unmethylated plasmid transformed into the cell as single-stranded DNA, enhances plasmid transfer to DpnII-containing strains of Streptococcus pneumoniae. This chain is Type II methyltransferase M2.DpnII, found in Streptococcus pneumoniae.